The following is a 351-amino-acid chain: Cell cycle control protein 50B (351 aa).

Over 1–33 the chain is Cytoplasmic; that stretch reads MTWSATARGAHQPDNTAFTQQRLPAWQPLLSAS. A helical transmembrane segment spans residues 34–54; that stretch reads IALPLFFCAGLAFIGLGLGLY. Residues 55–315 lie on the Exoplasmic loop side of the membrane; that stretch reads YSSNGIKELE…SISWMGGKNP (261 aa). Asn75, Asn213, and Asn286 each carry an N-linked (GlcNAc...) asparagine glycan. The chain crosses the membrane as a helical span at residues 316–336; it reads FLGIAYLVVGSLCILTGFVML. Over 337-351 the chain is Cytoplasmic; the sequence is VVYIRYQDQDDDDEE.

This sequence belongs to the CDC50/LEM3 family. As to quaternary structure, component of a P4-ATPase flippase complex which consists of a catalytic alpha subunit and an accessory beta subunit. Interacts with alpha subunits ATP8A1, ATP8B1, ATP8B2 and ATP8B4.

Its subcellular location is the cell membrane. Its function is as follows. Accessory component of a P4-ATPase flippase complex which catalyzes the hydrolysis of ATP coupled to the transport of aminophospholipids from the outer to the inner leaflet of various membranes and ensures the maintenance of asymmetric distribution of phospholipids. Phospholipid translocation also seems to be implicated in vesicle formation and in uptake of lipid signaling molecules. The beta subunit may assist in binding of the phospholipid substrate. Can mediate the export of alpha subunits ATP8A1, ATP8B1, ATP8B2 and ATP8B4 from the ER to the plasma membrane. The chain is Cell cycle control protein 50B (TMEM30B) from Homo sapiens (Human).